A 236-amino-acid chain; its full sequence is Alpha-acetolactate decarboxylase (236 aa).

The protein belongs to the alpha-acetolactate decarboxylase family.

It catalyses the reaction (2S)-2-acetolactate + H(+) = (R)-acetoin + CO2. It participates in polyol metabolism; (R,R)-butane-2,3-diol biosynthesis; (R,R)-butane-2,3-diol from pyruvate: step 2/3. Its function is as follows. Converts acetolactate into acetoin. The polypeptide is Alpha-acetolactate decarboxylase (aldB) (Lactococcus lactis subsp. cremoris (strain MG1363)).